The following is an 812-amino-acid chain: cAMP-regulated phosphoprotein 21 (812 aa).

The segment at methionine 1 to isoleucine 130 is disordered. An N-acetylserine modification is found at serine 2. Positions glutamine 9–glutamate 25 are enriched in low complexity. Positions glutamate 32–serine 58 form a coiled coil. Residue serine 33 is modified to Phosphoserine. Over residues leucine 40–arginine 53 the composition is skewed to basic and acidic residues. Residue serine 56 is modified to Phosphoserine. The segment covering isoleucine 90–leucine 100 has biased composition (low complexity). The span at glutamate 102–isoleucine 130 shows a compositional bias: basic and acidic residues. Serine 134 is subject to Phosphoserine. The region spanning arginine 164 to threonine 227 is the R3H domain. In terms of domain architecture, SUZ spans arginine 228–serine 300. The segment at serine 246–isoleucine 281 is disordered. Serine 300 carries the post-translational modification Phosphoserine. Disordered regions lie at residues arginine 332 to serine 436, histidine 485 to proline 544, and leucine 561 to proline 632. Over residues glycine 339–serine 349 the composition is skewed to low complexity. Residues asparagine 351–arginine 360 show a composition bias toward basic and acidic residues. Polar residues predominate over residues alanine 361 to asparagine 373. Residues serine 363 and serine 383 each carry the phosphoserine modification. Positions threonine 391–serine 423 are enriched in low complexity. Serine 562 carries the phosphoserine modification. The span at leucine 582 to proline 602 shows a compositional bias: polar residues. Residues glutamine 619 to proline 632 show a composition bias toward pro residues. Residue arginine 655 is modified to Asymmetric dimethylarginine.

Interacts with CALM1. Phosphorylation at Ser-56 favors interaction with CALM1. Post-translationally, isoform 1 is methylated by CARM1 at Arg-655 in immature thymocytes. Isoform 2 is expressed in brain. Isoform 1 is present in immature thymocytes (at protein level).

The protein localises to the cytoplasm. Its function is as follows. Isoform 2 may act as a competitive inhibitor of calmodulin-dependent enzymes such as calcineurin in neurons. This is cAMP-regulated phosphoprotein 21 (ARPP21) from Homo sapiens (Human).